A 156-amino-acid chain; its full sequence is Small ribosomal subunit protein bS18c (156 aa).

The interval 1-54 is disordered; that stretch reads MYTSKQPFLKSKQPFRKSKQPFRKSKQPFRKFKKPFRKSKQPFRRRPRIGPGDR. The span at 13–48 shows a compositional bias: basic residues; the sequence is QPFRKSKQPFRKSKQPFRKFKKPFRKSKQPFRRRPR.

The protein belongs to the bacterial ribosomal protein bS18 family. In terms of assembly, part of the 30S ribosomal subunit.

The protein resides in the plastid. It is found in the chloroplast. This is Small ribosomal subunit protein bS18c from Lolium perenne (Perennial ryegrass).